Consider the following 246-residue polypeptide: 1-(5-phosphoribosyl)-5-[(5-phosphoribosylamino)methylideneamino] imidazole-4-carboxamide isomerase (246 aa).

Catalysis depends on Asp8, which acts as the Proton acceptor. Asp131 acts as the Proton donor in catalysis.

The protein belongs to the HisA/HisF family.

It is found in the cytoplasm. It carries out the reaction 1-(5-phospho-beta-D-ribosyl)-5-[(5-phospho-beta-D-ribosylamino)methylideneamino]imidazole-4-carboxamide = 5-[(5-phospho-1-deoxy-D-ribulos-1-ylimino)methylamino]-1-(5-phospho-beta-D-ribosyl)imidazole-4-carboxamide. Its pathway is amino-acid biosynthesis; L-histidine biosynthesis; L-histidine from 5-phospho-alpha-D-ribose 1-diphosphate: step 4/9. The protein is 1-(5-phosphoribosyl)-5-[(5-phosphoribosylamino)methylideneamino] imidazole-4-carboxamide isomerase of Polaromonas naphthalenivorans (strain CJ2).